The primary structure comprises 77 residues: Acyl carrier protein (77 aa).

One can recognise a Carrier domain in the interval 2 to 77 (ADTLSRITKI…DVVEYIEGRQ (76 aa)). Residue Ser37 is modified to O-(pantetheine 4'-phosphoryl)serine.

The protein belongs to the acyl carrier protein (ACP) family. Post-translationally, 4'-phosphopantetheine is transferred from CoA to a specific serine of apo-ACP by AcpS. This modification is essential for activity because fatty acids are bound in thioester linkage to the sulfhydryl of the prosthetic group.

It localises to the cytoplasm. Its pathway is lipid metabolism; fatty acid biosynthesis. In terms of biological role, carrier of the growing fatty acid chain in fatty acid biosynthesis. This is Acyl carrier protein from Halalkalibacterium halodurans (strain ATCC BAA-125 / DSM 18197 / FERM 7344 / JCM 9153 / C-125) (Bacillus halodurans).